Here is a 504-residue protein sequence, read N- to C-terminus: ATP synthase subunit alpha, chloroplastic (504 aa).

170 to 177 (GDRQTGKT) provides a ligand contact to ATP.

It belongs to the ATPase alpha/beta chains family. In terms of assembly, F-type ATPases have 2 components, CF(1) - the catalytic core - and CF(0) - the membrane proton channel. CF(1) has five subunits: alpha(3), beta(3), gamma(1), delta(1), epsilon(1). CF(0) has four main subunits: a, b, b' and c.

The protein localises to the plastid. It localises to the chloroplast thylakoid membrane. It catalyses the reaction ATP + H2O + 4 H(+)(in) = ADP + phosphate + 5 H(+)(out). Produces ATP from ADP in the presence of a proton gradient across the membrane. The alpha chain is a regulatory subunit. The polypeptide is ATP synthase subunit alpha, chloroplastic (Cyanidium caldarium (Red alga)).